Reading from the N-terminus, the 121-residue chain is Small ribosomal subunit protein uS13 (121 aa).

The interval 89–121 (RRHRMSLPVRGQRTRTNARTRRGSRKTVAGRKK) is disordered. A compositionally biased stretch (basic residues) spans 100-121 (QRTRTNARTRRGSRKTVAGRKK).

The protein belongs to the universal ribosomal protein uS13 family. In terms of assembly, part of the 30S ribosomal subunit. Forms a loose heterodimer with protein S19. Forms two bridges to the 50S subunit in the 70S ribosome.

Located at the top of the head of the 30S subunit, it contacts several helices of the 16S rRNA. In the 70S ribosome it contacts the 23S rRNA (bridge B1a) and protein L5 of the 50S subunit (bridge B1b), connecting the 2 subunits; these bridges are implicated in subunit movement. Contacts the tRNAs in the A and P-sites. The polypeptide is Small ribosomal subunit protein uS13 (Prochlorococcus marinus subsp. pastoris (strain CCMP1986 / NIES-2087 / MED4)).